We begin with the raw amino-acid sequence, 293 residues long: Putative F-box/kelch-repeat protein At4g34170 (293 aa).

Residues 9-55 (VKTMLMLHDDLILNCLARVSRSNHPTLSLVCKRFHSLLASVELYQTR) enclose the F-box domain. Kelch repeat units lie at residues 94 to 140 (NIDA…TLDG), 141 to 187 (KIYV…ESVR), and 226 to 272 (SYCV…LADY).

This Arabidopsis thaliana (Mouse-ear cress) protein is Putative F-box/kelch-repeat protein At4g34170.